The chain runs to 1175 residues: DNA-directed RNA polymerase subunit beta (1175 aa).

The segment at 1–24 (MEGSLLVASSASNNETANNVESTD) is disordered. Positions 7-23 (VASSASNNETANNVEST) are enriched in low complexity.

It belongs to the RNA polymerase beta chain family. As to quaternary structure, the RNAP catalytic core consists of 2 alpha, 1 beta, 1 beta' and 1 omega subunit. When a sigma factor is associated with the core the holoenzyme is formed, which can initiate transcription.

The catalysed reaction is RNA(n) + a ribonucleoside 5'-triphosphate = RNA(n+1) + diphosphate. In terms of biological role, DNA-dependent RNA polymerase catalyzes the transcription of DNA into RNA using the four ribonucleoside triphosphates as substrates. This is DNA-directed RNA polymerase subunit beta from Renibacterium salmoninarum (strain ATCC 33209 / DSM 20767 / JCM 11484 / NBRC 15589 / NCIMB 2235).